Consider the following 108-residue polypeptide: ATP synthase peripheral stalk subunit F6, mitochondrial (108 aa).

The transit peptide at 1 to 32 (MTVQRIFRLSSVLRSAVSVHLRRNIGVTAVAF) directs the protein to the mitochondrion. N6-acetyllysine occurs at positions 41, 46, and 79. N6-acetyllysine; alternate is present on residues Lys84 and Lys99. Lys84 and Lys99 each carry N6-succinyllysine; alternate. Residue Lys105 is modified to N6-acetyllysine. Phosphoserine is present on Ser108.

Belongs to the eukaryotic ATPase subunit F6 family. As to quaternary structure, component of the ATP synthase complex composed at least of ATP5F1A/subunit alpha, ATP5F1B/subunit beta, ATP5MC1/subunit c (homooctomer), MT-ATP6/subunit a, MT-ATP8/subunit 8, ATP5ME/subunit e, ATP5MF/subunit f, ATP5MG/subunit g, ATP5MK/subunit k, ATP5MJ/subunit j, ATP5F1C/subunit gamma, ATP5F1D/subunit delta, ATP5F1E/subunit epsilon, ATP5PF/subunit F6, ATP5PB/subunit b, ATP5PD/subunit d, ATP5PO/subunit OSCP. ATP synthase complex consists of a soluble F(1) head domain (subunits alpha(3) and beta(3)) - the catalytic core - and a membrane F(0) domain - the membrane proton channel (subunits c, a, 8, e, f, g, k and j). These two domains are linked by a central stalk (subunits gamma, delta, and epsilon) rotating inside the F1 region and a stationary peripheral stalk (subunits F6, b, d, and OSCP).

The protein localises to the mitochondrion. It localises to the mitochondrion inner membrane. Functionally, subunit F6, of the mitochondrial membrane ATP synthase complex (F(1)F(0) ATP synthase or Complex V) that produces ATP from ADP in the presence of a proton gradient across the membrane which is generated by electron transport complexes of the respiratory chain. ATP synthase complex consist of a soluble F(1) head domain - the catalytic core - and a membrane F(1) domain - the membrane proton channel. These two domains are linked by a central stalk rotating inside the F(1) region and a stationary peripheral stalk. During catalysis, ATP synthesis in the catalytic domain of F(1) is coupled via a rotary mechanism of the central stalk subunits to proton translocation. In vivo, can only synthesize ATP although its ATP hydrolase activity can be activated artificially in vitro. Part of the complex F(0) domain. Part of the complex F(0) domain and the peripheric stalk, which acts as a stator to hold the catalytic alpha(3)beta(3) subcomplex and subunit a/ATP6 static relative to the rotary elements. The polypeptide is ATP synthase peripheral stalk subunit F6, mitochondrial (Rattus norvegicus (Rat)).